Consider the following 412-residue polypeptide: Tryptophan 2,3-dioxygenase (412 aa).

Residues 79–83 (FIVVH), Tyr-146, and Arg-150 each bind substrate. His-346 provides a ligand contact to heme. Residue Thr-360 participates in substrate binding.

Belongs to the tryptophan 2,3-dioxygenase family. Homotetramer. Requires heme as cofactor.

It carries out the reaction L-tryptophan + O2 = N-formyl-L-kynurenine. Its pathway is amino-acid degradation; L-tryptophan degradation via kynurenine pathway; L-kynurenine from L-tryptophan: step 1/2. Its function is as follows. Heme-dependent dioxygenase that catalyzes the oxidative cleavage of the L-tryptophan (L-Trp) pyrrole ring and converts L-tryptophan to N-formyl-L-kynurenine. Catalyzes the oxidative cleavage of the indole moiety. This is Tryptophan 2,3-dioxygenase from Sorangium cellulosum (strain So ce56) (Polyangium cellulosum (strain So ce56)).